A 690-amino-acid polypeptide reads, in one-letter code: Glycine--tRNA ligase beta subunit (690 aa).

It belongs to the class-II aminoacyl-tRNA synthetase family. Tetramer of two alpha and two beta subunits.

Its subcellular location is the cytoplasm. It catalyses the reaction tRNA(Gly) + glycine + ATP = glycyl-tRNA(Gly) + AMP + diphosphate. The chain is Glycine--tRNA ligase beta subunit from Desulfatibacillum aliphaticivorans.